We begin with the raw amino-acid sequence, 1035 residues long: Teashirt homolog 2 (1035 aa).

Positions 1-92 are disordered; that stretch reads MPRRKQQAPK…ESLLSDASDQ (92 aa). A coiled-coil region spans residues 13–42; it reads AGYAQEEQLKEEEEIKEEEEEEEDSGSVAQ. Residues 21 to 37 show a composition bias toward acidic residues; it reads LKEEEEIKEEEEEEEDS. 2 stretches are compositionally biased toward polar residues: residues 39-49 and 66-92; these read SVAQLQGSNDP and SYQN…ASDQ. A Glycyl lysine isopeptide (Lys-Gly) (interchain with G-Cter in SUMO2) cross-link involves residue lysine 189. C2H2-type zinc fingers lie at residues 216-240 and 276-300; these read FRCR…ETGH and LKCM…KTKH. Positions 240-266 are disordered; the sequence is HYQDDNRKKDKLRPTSYSKPRKRAFQD. Glycyl lysine isopeptide (Lys-Gly) (interchain with G-Cter in SUMO2) cross-links involve residues lysine 307 and lysine 316. Residues 381–405 form a C2H2-type 3; atypical zinc finger; that stretch reads LKCMECGSSHDTLQQLTTHMMVTGH. Lysine 418 participates in a covalent cross-link: Glycyl lysine isopeptide (Lys-Gly) (interchain with G-Cter in SUMO2). The segment covering 432–450 has biased composition (low complexity); sequence SLSDAPSSDSLAPKPSSNS. The disordered stretch occupies residues 432-496; that stretch reads SLSDAPSSDS…DPLQKPLDPA (65 aa). The span at 460 to 483 shows a compositional bias: basic and acidic residues; sequence ELKRESKKEKPEELRTDEKVLKSE. Residues lysine 462, lysine 481, lysine 498, and lysine 602 each participate in a glycyl lysine isopeptide (Lys-Gly) (interchain with G-Cter in SUMO2) cross-link. Disordered regions lie at residues 600–674 and 764–791; these read QVKK…VEPV and QPID…PQKH. Residues 601–669 show a composition bias toward basic and acidic residues; that stretch reads VKKEPEDKEE…KDGGEKEKAQ (69 aa). Residues lysine 801 and lysine 821 each participate in a glycyl lysine isopeptide (Lys-Gly) (interchain with G-Cter in SUMO2) cross-link. A DNA-binding region (homeobox) is located at residues 842–912; it reads RKGRQSNWNP…NVKYQLRKTG (71 aa). A C2H2-type 4 zinc finger spans residues 927–949; sequence FYCSDCASQFRTPSTYISHLESH. The segment covering 968–977 has biased composition (low complexity); sequence VEQEISRVSS. Disordered regions lie at residues 968–987 and 1015–1035; these read VEQE…TIAG and SKTH…VDEE. Residue serine 981 is modified to Phosphoserine. The C2H2-type 5 zinc-finger motif lies at 995–1018; the sequence is FKCKLCCRTFVSKHAVKLHLSKTH.

Belongs to the teashirt C2H2-type zinc-finger protein family. As to quaternary structure, interacts (via homeobox domain) with APBB1 (via PID domain 1). In terms of processing, sumoylated.

It is found in the nucleus. Probable transcriptional regulator involved in developmental processes. May act as a transcriptional repressor (Potential). The protein is Teashirt homolog 2 (TSHZ2) of Sus scrofa (Pig).